The primary structure comprises 234 residues: Large ribosomal subunit protein uL1 (234 aa).

It belongs to the universal ribosomal protein uL1 family. In terms of assembly, part of the 50S ribosomal subunit.

Its function is as follows. Binds directly to 23S rRNA. The L1 stalk is quite mobile in the ribosome, and is involved in E site tRNA release. In terms of biological role, protein L1 is also a translational repressor protein, it controls the translation of the L11 operon by binding to its mRNA. This Klebsiella pneumoniae subsp. pneumoniae (strain ATCC 700721 / MGH 78578) protein is Large ribosomal subunit protein uL1.